Here is a 329-residue protein sequence, read N- to C-terminus: Quinate dehydrogenase (329 aa).

It carries out the reaction L-quinate + NAD(+) = 3-dehydroquinate + NADH + H(+). The protein operates within aromatic compound metabolism; 3,4-dihydroxybenzoate biosynthesis; 3-dehydroquinate from D-quinate (NAD(+) route): step 1/1. The sequence is that of Quinate dehydrogenase (qutB) from Emericella nidulans (strain FGSC A4 / ATCC 38163 / CBS 112.46 / NRRL 194 / M139) (Aspergillus nidulans).